The following is a 640-amino-acid chain: Threonine--tRNA ligase (640 aa).

Positions 1–61 (MPVVTLPDGS…DKDSHLAIIT (61 aa)) constitute a TGS domain. The catalytic stretch occupies residues 242–533 (DHRRLGKQLD…LIENHAGNMP (292 aa)). Residues Cys-333, His-384, and His-510 each contribute to the Zn(2+) site.

Belongs to the class-II aminoacyl-tRNA synthetase family. As to quaternary structure, homodimer. Requires Zn(2+) as cofactor.

It localises to the cytoplasm. It catalyses the reaction tRNA(Thr) + L-threonine + ATP = L-threonyl-tRNA(Thr) + AMP + diphosphate + H(+). Its function is as follows. Catalyzes the attachment of threonine to tRNA(Thr) in a two-step reaction: L-threonine is first activated by ATP to form Thr-AMP and then transferred to the acceptor end of tRNA(Thr). Also edits incorrectly charged L-seryl-tRNA(Thr). This is Threonine--tRNA ligase from Polynucleobacter asymbioticus (strain DSM 18221 / CIP 109841 / QLW-P1DMWA-1) (Polynucleobacter necessarius subsp. asymbioticus).